A 76-amino-acid polypeptide reads, in one-letter code: Small ribosomal subunit protein bS18 (76 aa).

It belongs to the bacterial ribosomal protein bS18 family. In terms of assembly, part of the 30S ribosomal subunit. Forms a tight heterodimer with protein bS6.

In terms of biological role, binds as a heterodimer with protein bS6 to the central domain of the 16S rRNA, where it helps stabilize the platform of the 30S subunit. The polypeptide is Small ribosomal subunit protein bS18 (Stutzerimonas stutzeri (strain A1501) (Pseudomonas stutzeri)).